Here is a 608-residue protein sequence, read N- to C-terminus: Leucine aminopeptidase 2 (608 aa).

Substrate-binding positions include 134–136 (QCQ) and 269–274 (PYGGME). H298 lines the Zn(2+) pocket. The Proton acceptor role is filled by E299. H302 and E321 together coordinate Zn(2+). Residue Y386 is the Proton donor of the active site.

Belongs to the peptidase M1 family. The cofactor is Zn(2+).

Its subcellular location is the cytoplasm. It is found in the nucleus. It catalyses the reaction an epoxide + H2O = an ethanediol. Functionally, aminopeptidase that preferentially cleaves di- and tripeptides. Also has low epoxide hydrolase activity (in vitro). Can hydrolyze the epoxide leukotriene LTA(4) but it forms preferentially 5,6-dihydroxy-7,9,11,14-eicosatetraenoic acid rather than the cytokine leukotriene B(4) as the product compared to the homologous mammalian enzyme (in vitro). This is Leucine aminopeptidase 2 from Sclerotinia sclerotiorum (strain ATCC 18683 / 1980 / Ss-1) (White mold).